Consider the following 367-residue polypeptide: UDP-N-acetylglucosamine--N-acetylmuramyl-(pentapeptide) pyrophosphoryl-undecaprenol N-acetylglucosamine transferase (367 aa).

UDP-N-acetyl-alpha-D-glucosamine is bound by residues 15 to 17 (TGG), asparagine 127, arginine 163, serine 191, isoleucine 249, and glutamine 294.

This sequence belongs to the glycosyltransferase 28 family. MurG subfamily.

Its subcellular location is the cell inner membrane. It catalyses the reaction di-trans,octa-cis-undecaprenyl diphospho-N-acetyl-alpha-D-muramoyl-L-alanyl-D-glutamyl-meso-2,6-diaminopimeloyl-D-alanyl-D-alanine + UDP-N-acetyl-alpha-D-glucosamine = di-trans,octa-cis-undecaprenyl diphospho-[N-acetyl-alpha-D-glucosaminyl-(1-&gt;4)]-N-acetyl-alpha-D-muramoyl-L-alanyl-D-glutamyl-meso-2,6-diaminopimeloyl-D-alanyl-D-alanine + UDP + H(+). It functions in the pathway cell wall biogenesis; peptidoglycan biosynthesis. In terms of biological role, cell wall formation. Catalyzes the transfer of a GlcNAc subunit on undecaprenyl-pyrophosphoryl-MurNAc-pentapeptide (lipid intermediate I) to form undecaprenyl-pyrophosphoryl-MurNAc-(pentapeptide)GlcNAc (lipid intermediate II). The protein is UDP-N-acetylglucosamine--N-acetylmuramyl-(pentapeptide) pyrophosphoryl-undecaprenol N-acetylglucosamine transferase of Burkholderia lata (strain ATCC 17760 / DSM 23089 / LMG 22485 / NCIMB 9086 / R18194 / 383).